A 56-amino-acid polypeptide reads, in one-letter code: Large ribosomal subunit protein bL33 (56 aa).

Belongs to the bacterial ribosomal protein bL33 family.

This is Large ribosomal subunit protein bL33 from Marinomonas sp. (strain MWYL1).